A 388-amino-acid polypeptide reads, in one-letter code: Probable RNA-binding protein sce3 (388 aa).

Residues 18–84 (ESFGSTNWAD…GGMGSGYQRD (67 aa)) are disordered. A compositionally biased stretch (polar residues) spans 38 to 50 (DRTTSTYRATPSS). Residues serine 49, serine 50, and serine 60 each carry the phosphoserine modification. Residue threonine 61 is modified to Phosphothreonine. Phosphoserine occurs at positions 64, 67, and 71. Positions 94–169 (FTAHVGNLSF…RPVRITVAEP (76 aa)) constitute an RRM domain. A compositionally biased stretch (basic and acidic residues) spans 171 to 185 (RSFAREERSTGDWVR). The segment at 171 to 388 (RSFAREERST…WTKIGKGRKH (218 aa)) is disordered. Position 197 is a phosphoserine (serine 197). Residues 208 to 229 (RFRDPARDPSDRVREEPREWVR) show a composition bias toward basic and acidic residues. Residues 248 to 257 (PRSSSNVNTE) are compositionally biased toward polar residues. 3 positions are modified to phosphoserine: serine 250, serine 251, and serine 252. The segment covering 258–268 (ATPSATTTTSS) has biased composition (low complexity). The segment covering 289 to 349 (RVEEKLAKRT…LGDGEKKSSE (61 aa)) has biased composition (basic and acidic residues). A Phosphoserine modification is found at serine 347.

It localises to the cytoplasm. The protein is Probable RNA-binding protein sce3 (sce3) of Schizosaccharomyces pombe (strain 972 / ATCC 24843) (Fission yeast).